The chain runs to 345 residues: Transcription initiation factor IIB (345 aa).

The TFIIB-type zinc-finger motif lies at 20–53 (IVLTCPECKVYPPKIVERFSEGDVVCALCGLVLS). Positions 24, 27, 45, and 48 each coordinate Zn(2+). Residues 65–78 (TFSNDDHNGDDPSR) show a composition bias toward basic and acidic residues. The tract at residues 65–93 (TFSNDDHNGDDPSRVGEASNPLLDGNNLS) is disordered. 2 consecutive repeat copies span residues 136 to 212 (LCDA…IMKN) and 242 to 318 (FCSH…ILYE).

Belongs to the TFIIB family. Associates with TFIID-IIA (DA complex) to form TFIID-IIA-IIB (DAB-complex) which is then recognized by polymerase II.

The protein localises to the nucleus. General factor that plays a major role in the activation of eukaryotic genes transcribed by RNA polymerase II. This is Transcription initiation factor IIB (SUA7) from Saccharomyces cerevisiae (strain ATCC 204508 / S288c) (Baker's yeast).